A 337-amino-acid chain; its full sequence is Viral cathepsin (337 aa).

Residues 1–16 (MNKLLILFLLLNAALT) form the signal peptide. The propeptide at 17–126 (RQDNHASANN…VVDGPAQRQR (110 aa)) is activation peptide. Cystine bridges form between C147/C188, C181/C221, and C276/C324. Residue C150 is part of the active site. Residues H283 and N303 contribute to the active site.

Belongs to the peptidase C1 family. In terms of processing, synthesized as an inactive proenzyme and activated by proteolytic removal of the inhibitory propeptide.

The catalysed reaction is Endopeptidase of broad specificity, hydrolyzing substrates of both cathepsin L and cathepsin B.. In terms of biological role, cysteine protease that plays an essential role in host liquefaction to facilitate horizontal transmission of the virus. May participate in the degradation of foreign protein expressed by the baculovirus system. In Lepidoptera (butterflies and moths), this protein is Viral cathepsin (VCATH).